A 706-amino-acid polypeptide reads, in one-letter code: Gamma-adducin (706 aa).

A compositionally biased stretch (polar residues) spans 1 to 10; sequence MSSDASQGVI. The segment at 1–20 is disordered; sequence MSSDASQGVITTPPPPSMPH. Position 2 is an N-acetylserine (Ser2). Ser42, Ser64, Ser402, Ser414, Ser423, Ser442, and Ser461 each carry phosphoserine. 4 disordered regions span residues 471–497, 535–555, 575–610, and 666–706; these read AEDS…LNTN, PSTM…NPFS, GLED…KLEE, and EKIE…KVEA. Lys484 participates in a covalent cross-link: Glycyl lysine isopeptide (Lys-Gly) (interchain with G-Cter in SUMO2). Phosphoserine occurs at positions 585, 590, 673, 677, 679, 681, and 683. Residues 589-602 show a composition bias toward low complexity; sequence SSVSQIQSQTQSPQ. Basic residues predominate over residues 682 to 706; the sequence is PSKKKKKFRTPSFLKKNKKKEKVEA. An interaction with calmodulin region spans residues 684–701; it reads KKKKKFRTPSFLKKNKKK.

This sequence belongs to the aldolase class II family. Adducin subfamily. In terms of assembly, heterodimer of an alpha and a gamma subunit. Post-translationally, sumoylated. In terms of processing, proteolytically cleaved by asparagine endopeptidase (AEP) into 2 fragments. Overexpression of the 1-357 fragment induces neuronal apoptosis, and overexpression of either 1-357 or 358-706 fragment increases the degeneration of dendritic spines. Overexpression of the 1-357 fragment impairs neurite outgrowth by downregulating the expression of Rac2, and induces synaptic dysfunction and cognitive impairments in tau P301S transgenic mice, a mouse model for Alzheimer disease (AD). In terms of tissue distribution, ubiquitously expressed. Cleavage fragment 1-357 is abundantly expressed in the brain of patients with Alzheimer disease (AD), but hardly detectable in age-matched control individuals (at protein level).

It is found in the cytoplasm. It localises to the cytoskeleton. The protein resides in the cell membrane. Its function is as follows. Membrane-cytoskeleton-associated protein that promotes the assembly of the spectrin-actin network. Plays a role in actin filament capping. Binds to calmodulin. Involved in myogenic reactivity of the renal afferent arteriole (Af-art), renal interlobular arteries and middle cerebral artery (MCA) to increased perfusion pressure. Involved in regulation of potassium channels in the vascular smooth muscle cells (VSMCs) of the Af-art and MCA ex vivo. Involved in regulation of glomerular capillary pressure, glomerular filtration rate (GFR) and glomerular nephrin expression in response to hypertension. Involved in renal blood flow (RBF) autoregulation. Plays a role in podocyte structure and function. Regulates globular monomer actin (G-actin) and filamentous polymer actin (F-actin) ratios in the primary podocytes affecting actin cytoskeleton organization. Regulates expression of synaptopodin, RhoA, Rac1 and CDC42 in the renal cortex and the primary podocytes. Regulates expression of nephrin in the glomeruli and in the primary podocytes, expression of nephrin and podocinin in the renal cortex, and expression of focal adhesion proteins integrin alpha-3 and integrin beta-1 in the glomeruli. Involved in cell migration and cell adhesion of podocytes, and in podocyte foot process effacement. Regulates expression of profibrotics markers MMP2, MMP9, TGF beta-1, tubular tight junction protein E-cadherin, and mesenchymal markers vimentin and alpha-SMA. Promotes the growth of neurites. The sequence is that of Gamma-adducin (ADD3) from Homo sapiens (Human).